We begin with the raw amino-acid sequence, 229 residues long: MKRKNIALIPAAGIGARFGADKPKQYVEIGSKTVLEHTIGIFERHEAVDLTVVVVSPEDTFADKVQTAFPQVRVWKNGGQTRAETVRNGVAKLLETGLAAETDNILVHDAARCCLPSEALTRLIEQAGNAAEGGILAIPIADTLKCADGGNISATVERTSLWQAQTPQLFRAGLLHRALAAENLDGITDEASAVEKLGVRPLLIQGDVRNLKLTQPQDAYIVRLLLDAV.

Belongs to the IspD/TarI cytidylyltransferase family. IspD subfamily.

The catalysed reaction is 2-C-methyl-D-erythritol 4-phosphate + CTP + H(+) = 4-CDP-2-C-methyl-D-erythritol + diphosphate. It participates in isoprenoid biosynthesis; isopentenyl diphosphate biosynthesis via DXP pathway; isopentenyl diphosphate from 1-deoxy-D-xylulose 5-phosphate: step 2/6. Catalyzes the formation of 4-diphosphocytidyl-2-C-methyl-D-erythritol from CTP and 2-C-methyl-D-erythritol 4-phosphate (MEP). In Neisseria meningitidis serogroup B (strain ATCC BAA-335 / MC58), this protein is 2-C-methyl-D-erythritol 4-phosphate cytidylyltransferase.